A 199-amino-acid chain; its full sequence is dITP/XTP pyrophosphatase (199 aa).

7–12 serves as a coordination point for substrate; that stretch reads TSNRGK. The active-site Proton acceptor is Asp74. Mg(2+) is bound at residue Asp74. Substrate contacts are provided by residues Ser75, 156–159, Lys179, and 184–185; these read FGYD and HR.

Belongs to the HAM1 NTPase family. In terms of assembly, homodimer. Mg(2+) serves as cofactor.

It carries out the reaction XTP + H2O = XMP + diphosphate + H(+). It catalyses the reaction dITP + H2O = dIMP + diphosphate + H(+). The enzyme catalyses ITP + H2O = IMP + diphosphate + H(+). In terms of biological role, pyrophosphatase that catalyzes the hydrolysis of nucleoside triphosphates to their monophosphate derivatives, with a high preference for the non-canonical purine nucleotides XTP (xanthosine triphosphate), dITP (deoxyinosine triphosphate) and ITP. Seems to function as a house-cleaning enzyme that removes non-canonical purine nucleotides from the nucleotide pool, thus preventing their incorporation into DNA/RNA and avoiding chromosomal lesions. This is dITP/XTP pyrophosphatase from Sulfurimonas denitrificans (strain ATCC 33889 / DSM 1251) (Thiomicrospira denitrificans (strain ATCC 33889 / DSM 1251)).